Consider the following 345-residue polypeptide: Transmembrane protein 144 homolog (345 aa).

A run of 10 helical transmembrane segments spans residues 3–23 (IAVG…MFVP), 32–52 (GIFV…VVYS), 61–81 (PLAM…VPIM), 84–104 (IGIG…GWAA), 120–140 (PFLN…FSQI), 193–213 (LAII…VPVI), 233–253 (VFSH…GYVI), 265–285 (LVGP…SWFV), 293–313 (AVSF…WSVF), and 324–344 (LRLL…VGVS).

The protein belongs to the TMEM144 family.

The protein localises to the membrane. This is Transmembrane protein 144 homolog from Caenorhabditis elegans.